A 176-amino-acid polypeptide reads, in one-letter code: Macro domain-containing protein lmo2759 (176 aa).

Positions 1 to 175 constitute a Macro domain; the sequence is MEITIVKGDI…LYNKLINSEV (175 aa).

The protein belongs to the MacroD-type family.

This is Macro domain-containing protein lmo2759 from Listeria monocytogenes serovar 1/2a (strain ATCC BAA-679 / EGD-e).